Reading from the N-terminus, the 214-residue chain is MRLRNIPGAEAALREYPTFVDNPLFYKGNWKERFGNNNPIHVEIGCGKGRFINTLAERHPDINFIAVELKAEVVLRAVQRTEYKAIPNLAFVQYDASKLTELFADHEISRIYLNFSDPWPKTRHAKRRLTYKSFLNTYRQVLVADGELHMKTDNENLFEFSLNQFAAERFQMRNITFDLHQSKLAADNVMTEYEERFSSRGQRIYRVEASCVIK.

The S-adenosyl-L-methionine site is built by glutamate 43, glutamate 68, aspartate 95, and aspartate 117. Aspartate 117 is an active-site residue. Residues lysine 121, aspartate 153, and 191 to 194 contribute to the substrate site; that span reads TEYE.

This sequence belongs to the class I-like SAM-binding methyltransferase superfamily. TrmB family.

The catalysed reaction is guanosine(46) in tRNA + S-adenosyl-L-methionine = N(7)-methylguanosine(46) in tRNA + S-adenosyl-L-homocysteine. The protein operates within tRNA modification; N(7)-methylguanine-tRNA biosynthesis. Its function is as follows. Catalyzes the formation of N(7)-methylguanine at position 46 (m7G46) in tRNA. This is tRNA (guanine-N(7)-)-methyltransferase from Brevibacillus brevis (strain 47 / JCM 6285 / NBRC 100599).